The primary structure comprises 597 residues: Aspartate--tRNA(Asp/Asn) ligase (597 aa).

Glutamate 175 is an L-aspartate binding site. The segment at 199–202 (QQYK) is aspartate. 2 residues coordinate L-aspartate: arginine 221 and histidine 454. ATP is bound at residue 221–223 (RDE). Residue glutamate 488 participates in ATP binding. Arginine 495 is an L-aspartate binding site. 540–543 (GVDR) is an ATP binding site.

Belongs to the class-II aminoacyl-tRNA synthetase family. Type 1 subfamily. As to quaternary structure, homodimer.

It is found in the cytoplasm. The catalysed reaction is tRNA(Asx) + L-aspartate + ATP = L-aspartyl-tRNA(Asx) + AMP + diphosphate. In terms of biological role, aspartyl-tRNA synthetase with relaxed tRNA specificity since it is able to aspartylate not only its cognate tRNA(Asp) but also tRNA(Asn). Reaction proceeds in two steps: L-aspartate is first activated by ATP to form Asp-AMP and then transferred to the acceptor end of tRNA(Asp/Asn). The polypeptide is Aspartate--tRNA(Asp/Asn) ligase (Bartonella quintana (strain Toulouse) (Rochalimaea quintana)).